Consider the following 273-residue polypeptide: Nitrogenase iron protein 5 (273 aa).

8–15 (GKGGIGKS) contributes to the ATP binding site. Cys94 provides a ligand contact to [4Fe-4S] cluster. Arg97 carries the post-translational modification ADP-ribosylarginine; by dinitrogenase reductase ADP-ribosyltransferase. Cys129 is a binding site for [4Fe-4S] cluster.

The protein belongs to the NifH/BchL/ChlL family. Homodimer. The cofactor is [4Fe-4S] cluster. In terms of processing, the reversible ADP-ribosylation of Arg-97 inactivates the nitrogenase reductase and regulates nitrogenase activity.

The catalysed reaction is N2 + 8 reduced [2Fe-2S]-[ferredoxin] + 16 ATP + 16 H2O = H2 + 8 oxidized [2Fe-2S]-[ferredoxin] + 2 NH4(+) + 16 ADP + 16 phosphate + 6 H(+). Its function is as follows. The key enzymatic reactions in nitrogen fixation are catalyzed by the nitrogenase complex, which has 2 components: the iron protein and the molybdenum-iron protein. This Clostridium pasteurianum protein is Nitrogenase iron protein 5 (nifH5).